The following is a 397-amino-acid chain: ATP-dependent RNA helicase eIF4A (397 aa).

The Q motif motif lies at Asp24–Gln52. In terms of domain architecture, Helicase ATP-binding spans Ile55–Ile225. ATP is bound at residue Ala68–Thr75. Residues Asp173–Asp176 carry the DEAD box motif. The 162-residue stretch at Gly236 to Ile397 folds into the Helicase C-terminal domain.

The protein belongs to the DEAD box helicase family. eIF4A subfamily. Component of the eIF4F complex, which composition varies with external and internal environmental conditions. It is composed of at least eIF4A, eIF4E and eIF4G.

The protein localises to the cytoplasm. The catalysed reaction is ATP + H2O = ADP + phosphate + H(+). Functionally, ATP-dependent RNA helicase which is a subunit of the eIF4F complex involved in cap recognition and is required for mRNA binding to ribosome. In the current model of translation initiation, eIF4A unwinds RNA secondary structures in the 5'-UTR of mRNAs which is necessary to allow efficient binding of the small ribosomal subunit, and subsequent scanning for the initiator codon. This chain is ATP-dependent RNA helicase eIF4A (TIF1), found in Chaetomium globosum (strain ATCC 6205 / CBS 148.51 / DSM 1962 / NBRC 6347 / NRRL 1970) (Soil fungus).